Here is a 447-residue protein sequence, read N- to C-terminus: Methylenetetrahydrofolate--tRNA-(uracil-5-)-methyltransferase TrmFO (447 aa).

10–15 is an FAD binding site; sequence GAGLAG.

The protein belongs to the MnmG family. TrmFO subfamily. Requires FAD as cofactor.

Its subcellular location is the cytoplasm. It catalyses the reaction uridine(54) in tRNA + (6R)-5,10-methylene-5,6,7,8-tetrahydrofolate + NADH + H(+) = 5-methyluridine(54) in tRNA + (6S)-5,6,7,8-tetrahydrofolate + NAD(+). It carries out the reaction uridine(54) in tRNA + (6R)-5,10-methylene-5,6,7,8-tetrahydrofolate + NADPH + H(+) = 5-methyluridine(54) in tRNA + (6S)-5,6,7,8-tetrahydrofolate + NADP(+). Catalyzes the folate-dependent formation of 5-methyl-uridine at position 54 (M-5-U54) in all tRNAs. The chain is Methylenetetrahydrofolate--tRNA-(uracil-5-)-methyltransferase TrmFO from Symbiobacterium thermophilum (strain DSM 24528 / JCM 14929 / IAM 14863 / T).